We begin with the raw amino-acid sequence, 590 residues long: Negative elongation factor D (590 aa).

Residues 15-43 (YGSAAEWGDEADGGQQEDDSGEGEDDAEV) form a disordered region. The span at 21-43 (WGDEADGGQQEDDSGEGEDDAEV) shows a compositional bias: acidic residues.

It belongs to the NELF-D family. As to quaternary structure, the NELF complex is composed of NELFA, NELFB, NELFCD and NELFE; NELFA and NELFCD form a stable subcomplex that binds primarily through NELFCD to the N-terminus of NELFB. Binds RNA which may help to stabilize the NELF complex on nucleic acid. In vitro, the NELFA:NELFCD subcomplex binds to ssDNA and ssRNA in a sequence- and structure-dependent manner. Interacts with ARAF1. Interacts with PCF11. Interacts with NELFB. Interacts with KAT8.

Its subcellular location is the nucleus. Functionally, essential component of the NELF complex, a complex that negatively regulates the elongation of transcription by RNA polymerase II. The NELF complex, which acts via an association with the DSIF complex and causes transcriptional pausing, is counteracted by the P-TEFb kinase complex. The polypeptide is Negative elongation factor D (NELFCD) (Pongo abelii (Sumatran orangutan)).